Here is a 763-residue protein sequence, read N- to C-terminus: 5-methyltetrahydropteroyltriglutamate--homocysteine methyltransferase (763 aa).

5-methyltetrahydropteroyltri-L-glutamate is bound by residues 16–19 (RELK) and lysine 114. L-homocysteine contacts are provided by residues 438–440 (IGS) and glutamate 491. Residues 438-440 (IGS) and glutamate 491 each bind L-methionine. Residues 522–523 (RC) and tryptophan 568 each bind 5-methyltetrahydropteroyltri-L-glutamate. Aspartate 606 is an L-homocysteine binding site. Aspartate 606 lines the L-methionine pocket. Glutamate 612 is a 5-methyltetrahydropteroyltri-L-glutamate binding site. Zn(2+)-binding residues include histidine 648, cysteine 650, and glutamate 672. The Proton donor role is filled by histidine 701. Cysteine 733 is a binding site for Zn(2+).

The protein belongs to the vitamin-B12 independent methionine synthase family. Zn(2+) serves as cofactor.

It catalyses the reaction 5-methyltetrahydropteroyltri-L-glutamate + L-homocysteine = tetrahydropteroyltri-L-glutamate + L-methionine. The protein operates within amino-acid biosynthesis; L-methionine biosynthesis via de novo pathway; L-methionine from L-homocysteine (MetE route): step 1/1. In terms of biological role, catalyzes the transfer of a methyl group from 5-methyltetrahydrofolate to homocysteine resulting in methionine formation. This is 5-methyltetrahydropteroyltriglutamate--homocysteine methyltransferase from Parvibaculum lavamentivorans (strain DS-1 / DSM 13023 / NCIMB 13966).